The chain runs to 202 residues: HTH-type transcriptional regulator BetI (202 aa).

The region spanning 8–68 (PIRRRQLIDA…ATMRDITRQL (61 aa)) is the HTH tetR-type domain. The segment at residues 31 to 50 (TIAQIARRAGVSAGIISHYF) is a DNA-binding region (H-T-H motif).

Its pathway is amine and polyamine biosynthesis; betaine biosynthesis via choline pathway [regulation]. Its function is as follows. Repressor involved in the biosynthesis of the osmoprotectant glycine betaine. It represses transcription of the choline transporter BetT and the genes of BetAB involved in the synthesis of glycine betaine. The sequence is that of HTH-type transcriptional regulator BetI from Cronobacter sakazakii (strain ATCC BAA-894) (Enterobacter sakazakii).